We begin with the raw amino-acid sequence, 838 residues long: DNA gyrase subunit A (838 aa).

The 470-residue stretch at 41 to 510 (LPEVRDGLKP…ADGDVSDEDL (470 aa)) folds into the Topo IIA-type catalytic domain. Y129 acts as the O-(5'-phospho-DNA)-tyrosine intermediate in catalysis. Positions 537–543 (QKRGGKG) match the GyrA-box motif.

Belongs to the type II topoisomerase GyrA/ParC subunit family. In terms of assembly, heterotetramer, composed of two GyrA and two GyrB chains. In the heterotetramer, GyrA contains the active site tyrosine that forms a transient covalent intermediate with DNA, while GyrB binds cofactors and catalyzes ATP hydrolysis.

It is found in the cytoplasm. The catalysed reaction is ATP-dependent breakage, passage and rejoining of double-stranded DNA.. A type II topoisomerase that negatively supercoils closed circular double-stranded (ds) DNA in an ATP-dependent manner to modulate DNA topology and maintain chromosomes in an underwound state. Negative supercoiling favors strand separation, and DNA replication, transcription, recombination and repair, all of which involve strand separation. Also able to catalyze the interconversion of other topological isomers of dsDNA rings, including catenanes and knotted rings. Type II topoisomerases break and join 2 DNA strands simultaneously in an ATP-dependent manner. This Mycobacterium tuberculosis (strain CDC 1551 / Oshkosh) protein is DNA gyrase subunit A.